Reading from the N-terminus, the 496-residue chain is UDP-glycosyltransferase 84A2 (496 aa).

Histidine 23 functions as the Proton acceptor in the catalytic mechanism. Histidine 23 is an an anthocyanidin binding site. Glutamine 352, histidine 367, tryptophan 370, asparagine 371, serine 372, and glutamate 375 together coordinate UDP-alpha-D-glucose. An anthocyanidin is bound at residue glycine 390. UDP-alpha-D-glucose is bound by residues aspartate 391 and glutamine 392.

This sequence belongs to the UDP-glycosyltransferase family. Expressed in roots, cotyledons, leaf veins and trichomes.

The catalysed reaction is (E)-sinapate + UDP-alpha-D-glucose = 1-O-(trans-sinapoyl)-beta-D-glucose + UDP. Sinapate glucosyltransferase (SGT) required for the biosynthesis of the glucose ester sinapoylglucose and subsequently sinapoylmalate and sinapoylcholine. Is the major SGT activity in plant. Plays an important role in sinapoylation of anthocyanins. Sinapoylglucose produced by UGT84A2 is a significant source of sinapoyl moieties for anthocyanins. Indole-3-butyric acid (IBA)-specific glucosyltransferase that catalyzes the glucosylation of the auxin IBA, but not indole-3-acetic acid (IAA). May be involved in flowering regulation through IBA-mediated transcriptional repression of the auxin-response factors ARF6 and ARF8 and downstream flowering pathway genes. Can glucosylate the phytotoxic xenobiotic compound 2,4,5-trichlorophenol (TCP). The chain is UDP-glycosyltransferase 84A2 from Arabidopsis thaliana (Mouse-ear cress).